A 57-amino-acid polypeptide reads, in one-letter code: Large ribosomal subunit protein bL32 (57 aa).

The segment at 1-25 is disordered; sequence MATPSNKNSKSHKRNRRGHIGLNVP. Over residues 9-19 the composition is skewed to basic residues; that stretch reads SKSHKRNRRGH.

Belongs to the bacterial ribosomal protein bL32 family.

This is Large ribosomal subunit protein bL32 from Leuconostoc mesenteroides subsp. mesenteroides (strain ATCC 8293 / DSM 20343 / BCRC 11652 / CCM 1803 / JCM 6124 / NCDO 523 / NBRC 100496 / NCIMB 8023 / NCTC 12954 / NRRL B-1118 / 37Y).